Reading from the N-terminus, the 327-residue chain is MDTNMEDVGRVPAELTSSNFEPTTIPTLDGWIESLMNCKQLAESDVQRLCEKAREVLQDESNVQPVKCPVTVCGDIHGQFHDLMELFKIGGSCPDTNYLFMGDYVDRGYYSVETVTLLVALKIRYPNRITILRGNHESRQITQVYGFYDECLRKYGNANVWKYFTDLFDYLPLTALIDNQIFCLHGGLSPSIDTLDNIRALDRIQEVPHEGPMCDLLWSDPDDRCGWGISPRGAGYTFGQDISEAFNHNNGLTLIARAHQLVMEGYNWSQDRNVVTIFSAPNYCYRCGNQAAIMEIDEHLKYTFLQFDPCPRAGEPMVSRRTPDYFL.

Residues aspartate 75, histidine 77, aspartate 103, and asparagine 135 each coordinate Mn(2+). The Proton donor role is filled by histidine 136. The Mn(2+) site is built by histidine 185 and histidine 259. Position 327 is a leucine methyl ester (leucine 327).

Belongs to the PPP phosphatase family. PP-2A subfamily. It depends on Mn(2+) as a cofactor.

The catalysed reaction is O-phospho-L-seryl-[protein] + H2O = L-seryl-[protein] + phosphate. It carries out the reaction O-phospho-L-threonyl-[protein] + H2O = L-threonyl-[protein] + phosphate. The protein is Serine/threonine-protein phosphatase PP2A catalytic subunit (pph-1) of Neurospora crassa (strain ATCC 24698 / 74-OR23-1A / CBS 708.71 / DSM 1257 / FGSC 987).